The sequence spans 228 residues: Ureidoacrylate amidohydrolase RutB (228 aa).

Asp23 (proton acceptor) is an active-site residue. The active site involves Lys132. Cys165 functions as the Nucleophile in the catalytic mechanism.

Belongs to the isochorismatase family. RutB subfamily.

It catalyses the reaction (Z)-3-ureidoacrylate + H2O + H(+) = (Z)-3-aminoacrylate + NH4(+) + CO2. The catalysed reaction is (Z)-3-ureidoacrylate + H2O = (Z)-3-aminoacrylate + carbamate + H(+). It carries out the reaction (Z)-2-methylureidoacrylate + H2O + H(+) = (Z)-2-methylaminoacrylate + NH4(+) + CO2. Functionally, hydrolyzes ureidoacrylate to form aminoacrylate and carbamate. The carbamate hydrolyzes spontaneously, thereby releasing one of the nitrogen atoms of the pyrimidine ring as ammonia and one of its carbon atoms as CO2. The protein is Ureidoacrylate amidohydrolase RutB of Agrobacterium fabrum (strain C58 / ATCC 33970) (Agrobacterium tumefaciens (strain C58)).